Here is a 165-residue protein sequence, read N- to C-terminus: ATP synthase subunit b (165 aa).

A helical transmembrane segment spans residues Leu-5–Leu-25.

The protein belongs to the ATPase B chain family. As to quaternary structure, F-type ATPases have 2 components, F(1) - the catalytic core - and F(0) - the membrane proton channel. F(1) has five subunits: alpha(3), beta(3), gamma(1), delta(1), epsilon(1). F(0) has three main subunits: a(1), b(2) and c(10-14). The alpha and beta chains form an alternating ring which encloses part of the gamma chain. F(1) is attached to F(0) by a central stalk formed by the gamma and epsilon chains, while a peripheral stalk is formed by the delta and b chains.

It is found in the cell membrane. Functionally, f(1)F(0) ATP synthase produces ATP from ADP in the presence of a proton or sodium gradient. F-type ATPases consist of two structural domains, F(1) containing the extramembraneous catalytic core and F(0) containing the membrane proton channel, linked together by a central stalk and a peripheral stalk. During catalysis, ATP synthesis in the catalytic domain of F(1) is coupled via a rotary mechanism of the central stalk subunits to proton translocation. In terms of biological role, component of the F(0) channel, it forms part of the peripheral stalk, linking F(1) to F(0). In Clostridioides difficile (strain 630) (Peptoclostridium difficile), this protein is ATP synthase subunit b.